The chain runs to 336 residues: Opsin-1, short-wave-sensitive 1 (336 aa).

Topologically, residues 1–29 (MDAWAVQFGNASKVSPFEGEQYHIAPKWA) are extracellular. N-linked (GlcNAc...) asparagine glycosylation occurs at Asn10. The chain crosses the membrane as a helical span at residues 30–54 (FYLQAAFMGFVFIVGTPMNGIVLFV). At 55 to 66 (TMKYKKLRQPLN) the chain is on the cytoplasmic side. Residues 67-91 (YILVNISLAGFIFDTFSVSQVFVCA) form a helical membrane-spanning segment. The Extracellular segment spans residues 92–106 (ARGYYFLGYTLCAME). Cys103 and Cys180 are disulfide-bonded. Residues 107–126 (AAMGSIAGLVTGWSLAVLAF) traverse the membrane as a helical segment. The Cytoplasmic portion of the chain corresponds to 127–145 (ERYVVICKPFGSFKFGQGQ). Residues 146–169 (AVGAVVFTWIIGTACATPPFFGWS) traverse the membrane as a helical segment. The Extracellular segment spans residues 170–195 (RYIPEGLGTACGPDWYTKSEEYNSES). The chain crosses the membrane as a helical span at residues 196-223 (YTYFLLITCFMMPMTIIIFSYSQLLGAL). The Cytoplasmic portion of the chain corresponds to 224-245 (RAVAAQQAESESTQKAEREVSR). The chain crosses the membrane as a helical span at residues 246–269 (MVVVMVGSFVLCYAPYAVTAMYFA). Over 270 to 277 (NSDEPNKD) the chain is Extracellular. The helical transmembrane segment at 278 to 302 (YRLVAIPAFFSKSSCVYNPLIYAFM) threads the bilayer. Residue Lys289 is modified to N6-(retinylidene)lysine. The Cytoplasmic segment spans residues 303–336 (NKQFNACIMETVFGKKIDESSEVSSKTETSSVSA).

Belongs to the G-protein coupled receptor 1 family. Opsin subfamily. Phosphorylated on some or all of the serine and threonine residues present in the C-terminal region. As to expression, retinal short single cones, outer and inner segments.

Its subcellular location is the membrane. Visual pigments are the light-absorbing molecules that mediate vision. They consist of an apoprotein, opsin, covalently linked to cis-retinal. The chain is Opsin-1, short-wave-sensitive 1 (opn1sw1) from Danio rerio (Zebrafish).